Here is a 148-residue protein sequence, read N- to C-terminus: Large ribosomal subunit protein bL9 (148 aa).

Belongs to the bacterial ribosomal protein bL9 family.

Its function is as follows. Binds to the 23S rRNA. The sequence is that of Large ribosomal subunit protein bL9 from Hahella chejuensis (strain KCTC 2396).